The chain runs to 440 residues: Proline--tRNA ligase (440 aa).

This sequence belongs to the class-II aminoacyl-tRNA synthetase family. ProS type 2 subfamily. As to quaternary structure, homodimer.

The protein resides in the cytoplasm. It carries out the reaction tRNA(Pro) + L-proline + ATP = L-prolyl-tRNA(Pro) + AMP + diphosphate. In terms of biological role, catalyzes the attachment of proline to tRNA(Pro) in a two-step reaction: proline is first activated by ATP to form Pro-AMP and then transferred to the acceptor end of tRNA(Pro). This chain is Proline--tRNA ligase, found in Methylocella silvestris (strain DSM 15510 / CIP 108128 / LMG 27833 / NCIMB 13906 / BL2).